A 472-amino-acid chain; its full sequence is 4-O-methyl-glucuronoyl methylesterase 1 (472 aa).

Residues 1 to 20 form the signal peptide; it reads MKSAAYLAALAAVLPAYVNA. The region spanning 21–56 is the CBM1 domain; it reads QAQEWGQCGGIGWTGATTCVSGTVCTVLNPYYSQCL. Residues 62-97 are disordered; it reads TAPPPPPPPPTSVSSSSSSSTSSAPPSGPSGTSPTC. A compositionally biased stretch (pro residues) spans 63 to 72; that stretch reads APPPPPPPPT. Residues 73–96 are compositionally biased toward low complexity; it reads SVSSSSSSSTSSAPPSGPSGTSPT. 3 disulfides stabilise this stretch: Cys97–Cys131, Cys283–Cys419, and Cys315–Cys391. The short motif at 282-287 is the GXSYXG catalytic site motif element; sequence GCSRDG. Ser284 acts as the Nucleophile in catalysis. Substrate is bound by residues Lys288, Gln330, Glu338, and Trp382. Residue His418 is the Proton donor/acceptor of the active site. Asn465 carries N-linked (GlcNAc...) asparagine glycosylation.

It belongs to the carbohydrate esterase 15 (CE15) family.

Its subcellular location is the secreted. It carries out the reaction a 4-O-methyl-alpha-D-glucuronosyl ester derivative + H2O = 4-O-methyl-alpha-D-glucuronate derivative + an alcohol + H(+). In terms of biological role, glucuronoyl esterase which may play a significant role in biomass degradation, as it is considered to disconnect hemicellulose from lignin through the hydrolysis of the ester bond between 4-O-methyl-D-glucuronic acid residues of glucuronoxylans and aromatic alcohols of lignin. Can hydrolyze benzyl glucuronic acid (BnGlcA), allyl glucuronic acid (allylGlcA) and to a lower degree methyl glucuronic acid (MeGlcA) in vitro. In Phanerochaete chrysosporium (strain RP-78 / ATCC MYA-4764 / FGSC 9002) (White-rot fungus), this protein is 4-O-methyl-glucuronoyl methylesterase 1.